Consider the following 899-residue polypeptide: Protein translocase subunit SecA (899 aa).

ATP contacts are provided by residues Q87, 105–109 (GEGKT), and D516. C884, C886, C895, and H896 together coordinate Zn(2+).

It belongs to the SecA family. Monomer and homodimer. Part of the essential Sec protein translocation apparatus which comprises SecA, SecYEG and auxiliary proteins SecDF. Other proteins may also be involved. Zn(2+) serves as cofactor.

Its subcellular location is the cell inner membrane. The protein localises to the cytoplasm. The enzyme catalyses ATP + H2O + cellular proteinSide 1 = ADP + phosphate + cellular proteinSide 2.. In terms of biological role, part of the Sec protein translocase complex. Interacts with the SecYEG preprotein conducting channel. Has a central role in coupling the hydrolysis of ATP to the transfer of proteins into and across the cell membrane, serving as an ATP-driven molecular motor driving the stepwise translocation of polypeptide chains across the membrane. The protein is Protein translocase subunit SecA of Borreliella burgdorferi (strain ZS7) (Borrelia burgdorferi).